A 293-amino-acid chain; its full sequence is Shikimate dehydrogenase (NADP(+)) (293 aa).

Residues 26–28 (SKS) and Thr73 each bind shikimate. The active-site Proton acceptor is the Lys77. Position 89 (Asp89) interacts with NADP(+). 2 residues coordinate shikimate: Asn98 and Asp113. Residues 137–141 (GAGGA), 161–166 (NRTKQR), and Ile231 each bind NADP(+). Tyr233 is a shikimate binding site. NADP(+) is bound at residue Gly254.

It belongs to the shikimate dehydrogenase family. As to quaternary structure, homodimer.

It carries out the reaction shikimate + NADP(+) = 3-dehydroshikimate + NADPH + H(+). It participates in metabolic intermediate biosynthesis; chorismate biosynthesis; chorismate from D-erythrose 4-phosphate and phosphoenolpyruvate: step 4/7. Its function is as follows. Involved in the biosynthesis of the chorismate, which leads to the biosynthesis of aromatic amino acids. Catalyzes the reversible NADPH linked reduction of 3-dehydroshikimate (DHSA) to yield shikimate (SA). This chain is Shikimate dehydrogenase (NADP(+)), found in Bartonella henselae (strain ATCC 49882 / DSM 28221 / CCUG 30454 / Houston 1) (Rochalimaea henselae).